The primary structure comprises 354 residues: DNA ligase C2 (354 aa).

The active-site N6-AMP-lysine intermediate is K29.

This sequence belongs to the ATP-dependent DNA ligase family.

It carries out the reaction ATP + (deoxyribonucleotide)n-3'-hydroxyl + 5'-phospho-(deoxyribonucleotide)m = (deoxyribonucleotide)n+m + AMP + diphosphate.. Functionally, DNA ligase that seals nicks in double-stranded DNA during DNA replication, DNA recombination and DNA repair. Has weak intrinsic nick joining activities and accumulates DNA-adenylate. Acts as a backup for LigD in the Ku-LigD-dependent NHEJ pathway. The sequence is that of DNA ligase C2 (ligC2) from Mycolicibacterium smegmatis (strain ATCC 700084 / mc(2)155) (Mycobacterium smegmatis).